The chain runs to 323 residues: Transcription factor LUX (323 aa).

Disordered regions lie at residues 1-25 (MGEE…WEMG), 53-139 (ERSR…DLSG), and 267-298 (GYHH…ESNP). Residues 65–87 (SETTLSSLRGGSSGPNTSSSNNN) are compositionally biased toward low complexity. The segment at residues 139-200 (GKTLKRPRLV…HLQKYRLYLK (62 aa)) is a DNA-binding region (myb-like GARP).

In terms of assembly, interacts with ELF3 and forms a complex with ELF3 and ELF4.

The protein localises to the nucleus. Its function is as follows. Transcription factor that is essential for the generation of the circadian clock oscillation. Is necessary for activation of CCA1 and LHY expression. Is coregulated with TOC1 and seems to be repressed by CCA1 and LHY by direct binding of these proteins to the evening element in the LUX promoter. Directly regulates the expression of PRR9, a major component of the morning transcriptional feedback circuit, by binding specific sites on PRR9 promoter. Binds to its own promoter, inducing a negative auto-regulatory feedback loop within the core clock. Binds to ELF3 and associates with ELF4 in a diurnal complex which is required for the expression of the growth-promoting transcription factors PIF4 and PIF5 and subsequent hypocotyl growth in the early evening. The polypeptide is Transcription factor LUX (LUX) (Arabidopsis thaliana (Mouse-ear cress)).